A 661-amino-acid chain; its full sequence is SUMO-activating enzyme subunit 2 (661 aa).

ATP contacts are provided by residues 29–34, Asp-53, 61–64, Lys-77, and 122–127; these read GAGGIG, NLNR, and DNISAR. Zn(2+) contacts are provided by Cys-163 and Cys-166. Catalysis depends on Cys-178, which acts as the Glycyl thioester intermediate. 2 residues coordinate Zn(2+): Cys-436 and Cys-439. The interval 545–661 is disordered; it reads KKQQQKEKDQ…SKKLKSNLQD (117 aa). Residues 548-563 are compositionally biased toward basic and acidic residues; the sequence is QQKEKDQKEGKTTTIE. 2 stretches are compositionally biased toward low complexity: residues 577 to 607 and 623 to 634; these read TSQTTTTTTTTTTTTESDNNSNNNKNNNNNN and SSTTTSSATPSI.

Belongs to the ubiquitin-activating E1 family. Heterodimer of sae1 and sae2. The complex binds sumo via sae2.

It localises to the nucleus. It functions in the pathway protein modification; protein sumoylation. Its function is as follows. The dimeric enzyme acts as an E1 ligase for sumo. It mediates ATP-dependent activation of sumo and formation of a thioester with a conserved cysteine residue on sae2. In Dictyostelium discoideum (Social amoeba), this protein is SUMO-activating enzyme subunit 2 (uba2).